A 274-amino-acid polypeptide reads, in one-letter code: Large ribosomal subunit protein uL2 (274 aa).

Disordered stretches follow at residues 21–59 (KVGL…GGHK) and 223–274 (VAMN…QLKG). The segment covering 32-42 (SLTSGKKSSGG) has biased composition (low complexity). Basic residues predominate over residues 45-59 (NHGRITTRHRGGGHK). Basic and acidic residues predominate over residues 263–274 (KSSDKYIKQLKG).

It belongs to the universal ribosomal protein uL2 family. In terms of assembly, part of the 50S ribosomal subunit. Forms a bridge to the 30S subunit in the 70S ribosome.

One of the primary rRNA binding proteins. Required for association of the 30S and 50S subunits to form the 70S ribosome, for tRNA binding and peptide bond formation. It has been suggested to have peptidyltransferase activity; this is somewhat controversial. Makes several contacts with the 16S rRNA in the 70S ribosome. This Wolbachia sp. subsp. Drosophila simulans (strain wRi) protein is Large ribosomal subunit protein uL2.